The primary structure comprises 876 residues: Alanine--tRNA ligase (876 aa).

Zn(2+)-binding residues include histidine 568, histidine 572, cysteine 669, and histidine 673.

It belongs to the class-II aminoacyl-tRNA synthetase family. It depends on Zn(2+) as a cofactor.

It localises to the cytoplasm. The enzyme catalyses tRNA(Ala) + L-alanine + ATP = L-alanyl-tRNA(Ala) + AMP + diphosphate. Its function is as follows. Catalyzes the attachment of alanine to tRNA(Ala) in a two-step reaction: alanine is first activated by ATP to form Ala-AMP and then transferred to the acceptor end of tRNA(Ala). Also edits incorrectly charged Ser-tRNA(Ala) and Gly-tRNA(Ala) via its editing domain. In Sulfurihydrogenibium sp. (strain YO3AOP1), this protein is Alanine--tRNA ligase.